We begin with the raw amino-acid sequence, 1070 residues long: RecBCD enzyme subunit RecC (1070 aa).

The protein belongs to the RecC family. In terms of assembly, heterotrimer of RecB, RecC and RecD. All subunits contribute to DNA-binding.

Its function is as follows. A helicase/nuclease that prepares dsDNA breaks (DSB) for recombinational DNA repair. Binds to DSBs and unwinds DNA via a highly rapid and processive ATP-dependent bidirectional helicase activity. Unwinds dsDNA until it encounters a Chi (crossover hotspot instigator) sequence from the 3' direction. Cuts ssDNA a few nucleotides 3' to the Chi site. The properties and activities of the enzyme are changed at Chi. The Chi-altered holoenzyme produces a long 3'-ssDNA overhang and facilitates RecA-binding to the ssDNA for homologous DNA recombination and repair. Holoenzyme degrades any linearized DNA that is unable to undergo homologous recombination. In the holoenzyme this subunit recognizes the wild-type Chi sequence, and when added to isolated RecB increases its ATP-dependent helicase processivity. The chain is RecBCD enzyme subunit RecC from Buchnera aphidicola subsp. Acyrthosiphon pisum (strain APS) (Acyrthosiphon pisum symbiotic bacterium).